Reading from the N-terminus, the 301-residue chain is uncharacterized protein (301 aa).

An N-terminal signal peptide occupies residues 1 to 25 (MKFKNTLSIFKILIILFSFYNVAFS). At 26 to 279 (DDTEKYTFKG…STTGSKDSST (254 aa)) the chain is on the extracellular side. The segment at 174-281 (LYTGSSNTPN…TGSKDSSTGN (108 aa)) is disordered. 4 N-linked (GlcNAc...) asparagine glycosylation sites follow: Asn-191, Asn-212, Asn-234, and Asn-241. The segment covering 204–234 (SSSDSTNSNSSSTDTASSSPSSSPSSSPSPN) has biased composition (low complexity). Over residues 254 to 281 (GGVETSTAGSSTGTTSSTTGSKDSSTGN) the composition is skewed to low complexity. The helical transmembrane segment at 280–300 (GNSILPTLIIVTFFVLTLVIM) threads the bilayer. A topological domain (cytoplasmic) is located at residue Ser-301.

It localises to the membrane. This is an uncharacterized protein from Dictyostelium discoideum (Social amoeba).